Consider the following 212-residue polypeptide: Thiamine-phosphate synthase (212 aa).

4-amino-2-methyl-5-(diphosphooxymethyl)pyrimidine contacts are provided by residues 40 to 44 and Asn75; that span reads QFREK. Mg(2+) contacts are provided by Asp76 and Asp95. Ser113 contacts 4-amino-2-methyl-5-(diphosphooxymethyl)pyrimidine. Position 139 to 141 (139 to 141) interacts with 2-[(2R,5Z)-2-carboxy-4-methylthiazol-5(2H)-ylidene]ethyl phosphate; the sequence is TIS. Residue Lys142 coordinates 4-amino-2-methyl-5-(diphosphooxymethyl)pyrimidine. 2-[(2R,5Z)-2-carboxy-4-methylthiazol-5(2H)-ylidene]ethyl phosphate-binding positions include Gly171 and 191-192; that span reads IS.

It belongs to the thiamine-phosphate synthase family. Mg(2+) serves as cofactor.

It carries out the reaction 2-[(2R,5Z)-2-carboxy-4-methylthiazol-5(2H)-ylidene]ethyl phosphate + 4-amino-2-methyl-5-(diphosphooxymethyl)pyrimidine + 2 H(+) = thiamine phosphate + CO2 + diphosphate. It catalyses the reaction 2-(2-carboxy-4-methylthiazol-5-yl)ethyl phosphate + 4-amino-2-methyl-5-(diphosphooxymethyl)pyrimidine + 2 H(+) = thiamine phosphate + CO2 + diphosphate. The enzyme catalyses 4-methyl-5-(2-phosphooxyethyl)-thiazole + 4-amino-2-methyl-5-(diphosphooxymethyl)pyrimidine + H(+) = thiamine phosphate + diphosphate. The protein operates within cofactor biosynthesis; thiamine diphosphate biosynthesis; thiamine phosphate from 4-amino-2-methyl-5-diphosphomethylpyrimidine and 4-methyl-5-(2-phosphoethyl)-thiazole: step 1/1. Condenses 4-methyl-5-(beta-hydroxyethyl)thiazole monophosphate (THZ-P) and 2-methyl-4-amino-5-hydroxymethyl pyrimidine pyrophosphate (HMP-PP) to form thiamine monophosphate (TMP). The polypeptide is Thiamine-phosphate synthase (Staphylococcus haemolyticus (strain JCSC1435)).